The chain runs to 598 residues: UvrABC system protein C (598 aa).

Residues 14–91 (DSPGCYLHKD…IQKNMPKYNI (78 aa)) form the GIY-YIG domain. Positions 196-231 (DKIIEDLRSKMLAASKEMAFERAAEYRDLISGIATM) constitute a UVR domain.

This sequence belongs to the UvrC family. Interacts with UvrB in an incision complex.

It is found in the cytoplasm. The UvrABC repair system catalyzes the recognition and processing of DNA lesions. UvrC both incises the 5' and 3' sides of the lesion. The N-terminal half is responsible for the 3' incision and the C-terminal half is responsible for the 5' incision. The sequence is that of UvrABC system protein C from Streptococcus pyogenes serotype M1.